A 228-amino-acid chain; its full sequence is uncharacterized protein (228 aa).

Positions 90–115 (TDESEESSSANNTTTTASHTLSNSKK) are disordered. A compositionally biased stretch (low complexity) spans 96–113 (SSSANNTTTTASHTLSNS).

The protein localises to the cytoplasm. It localises to the cell cortex. In terms of biological role, deletion results in antifungal drug fluconazole-resistant phenotype. This is an uncharacterized protein from Saccharomyces cerevisiae (strain ATCC 204508 / S288c) (Baker's yeast).